Consider the following 170-residue polypeptide: Photosystem I assembly protein Ycf3 (170 aa).

3 TPR repeats span residues 35-68 (AFTYYRDGMLAQSEGNYAEALQNYYEAMRLEIDP), 72-105 (SYILYNIGLIHTSNGEHTKALEYYFRALERNPFL), and 120-153 (GEQAILQGDSEIAEAWFDQAAEYWKQAIALTPGN).

Belongs to the Ycf3 family.

Its subcellular location is the plastid. It is found in the chloroplast thylakoid membrane. In terms of biological role, essential for the assembly of the photosystem I (PSI) complex. May act as a chaperone-like factor to guide the assembly of the PSI subunits. This Oryza sativa (Rice) protein is Photosystem I assembly protein Ycf3.